Reading from the N-terminus, the 80-residue chain is U20-ctenitoxin-Pn1a (80 aa).

Intrachain disulfides connect Cys3/Cys20, Cys10/Cys26, Cys17/Cys52, Cys19/Cys40, Cys28/Cys38, Cys58/Cys71, and Cys75/Cys80.

Expressed by the venom gland.

It is found in the secreted. Functionally, omega-agatoxin are antagonists of voltage-gated calcium channels (Cav). Induces rapid general flaccid paralysis followed by death when injected into the cerebral ventricle of mice at dose levels of 3 ug per mouse. The sequence is that of U20-ctenitoxin-Pn1a from Phoneutria nigriventer (Brazilian armed spider).